A 760-amino-acid polypeptide reads, in one-letter code: Transmembrane channel-like protein 1 (760 aa).

A disordered region spans residues methionine 1–glutamate 80. The Cytoplasmic segment spans residues methionine 1 to glycine 182. Positions lysine 13–glutamate 29 are enriched in acidic residues. Basic and acidic residues predominate over residues aspartate 30 to arginine 39. Position 37 is a phosphoserine (serine 37). Threonine 45 is subject to Phosphothreonine. Residues asparagine 50–glutamate 61 show a composition bias toward acidic residues. Position 128 is a phosphoserine (serine 128). Residues serine 183–proline 220 form a helical membrane-spanning segment. The Extracellular portion of the chain corresponds to tyrosine 221–phenylalanine 271. Residues arginine 272–aspartate 303 traverse the membrane as a helical segment. Over glycine 304–histidine 359 the chain is Cytoplasmic. Serine 314 bears the Phosphoserine mark. Residues leucine 360–serine 390 form a helical membrane-spanning segment. Residues glutamine 391 to glycine 402 lie on the Extracellular side of the membrane. Phosphothreonine is present on threonine 400. A helical transmembrane segment spans residues tryptophan 403–leucine 430. Topologically, residues glutamate 431–histidine 434 are cytoplasmic. Residues proline 435–isoleucine 469 form a helical membrane-spanning segment. Over glutamate 470–cysteine 515 the chain is Extracellular. A helical membrane pass occupies residues tryptophan 516–cysteine 553. Topologically, residues asparagine 554–aspartate 572 are cytoplasmic. Residues isoleucine 573 to phenylalanine 593 form a helical membrane-spanning segment. Residues alanine 594–serine 596 lie on the Extracellular side of the membrane. Residues leucine 597–cysteine 619 form a helical membrane-spanning segment. The Cytoplasmic segment spans residues asparagine 620 to asparagine 633. The chain crosses the membrane as a helical span at residues asparagine 634–serine 657. The Extracellular portion of the chain corresponds to leucine 658–glycine 700. A helical transmembrane segment spans residues leucine 701 to methionine 734. Residues lysine 735 to glutamine 760 are Cytoplasmic-facing.

It belongs to the TMC family. As to quaternary structure, forms the MET channel complosed of TMC dimer (TMC1 or TMC2), TMIE, TOMT, CIB (CIB2 or CIB3), LHFPL5 and PDH15. The interaction of TMC1 and TMC2 with TOMT is required for the transportation of TMC1/2 into the stereocilia of hair cells. Interacts (via N-terminus) with both isoforms CD1 and CD3 of PCDH15. Can form a heterodimer with TMC2, TMC5 or TMC7. As to expression, detected in fetal cochlea, and at low levels in placenta and testis.

Its subcellular location is the cell membrane. The enzyme catalyses Ca(2+)(in) = Ca(2+)(out). Its function is as follows. Pore-forming subunit of the mechanotransducer (MET) non-selective cation channel complex located at the tips of stereocilia of cochlear hair cells and that mediates sensory transduction in the auditory system. The MET complex is composed of two dimeric pore-forming ion-conducting transmembrane TMC (TMC1 or TMC2) subunits, and aided by several auxiliary proteins including LHFPL5, TMIE, CIB2/3 and TOMT, and the tip-link PCDH15. MET channel is activated by tension in the tip-link extending from the side wall of one stereocilium to the tip of the adjacent shorter stereocilium, where the channel is located. TMC1 MET channel is highly permeable to calcium and likely transports monovalent cations. Also involved in vestibular hair cells transduction current. The polypeptide is Transmembrane channel-like protein 1 (Homo sapiens (Human)).